The following is a 1289-amino-acid chain: uncharacterized protein (1289 aa).

Residues 615 to 733 (LDMYDVLKEL…DGMLSYSAQL (119 aa)) form the MHD1 domain. A disordered region spans residues 745 to 774 (DEPSYSLESSDTRSSLSLNNANVNHEKSRS). The span at 748 to 762 (SYSLESSDTRSSLSL) shows a compositional bias: low complexity. The 133-residue stretch at 834 to 966 (AQYHSSHNLE…DDGFPIDFSL (133 aa)) folds into the C2 domain. An MHD2 domain is found at 1044 to 1184 (YDAILPLFDY…KSVSELKDEV (141 aa)).

The protein resides in the cytoplasm. This is an uncharacterized protein from Saccharomyces cerevisiae (strain ATCC 204508 / S288c) (Baker's yeast).